The chain runs to 245 residues: 8-amino-3,8-dideoxy-manno-octulosonate cytidylyltransferase (245 aa).

Belongs to the KdsB family.

It is found in the cytoplasm. The enzyme catalyses 8-amino-3,8-dideoxy-alpha-D-manno-octulosonate + CTP = CMP-8-amino-3,8-dideoxy-alpha-D-manno-oct-2-ulosonate + diphosphate. It functions in the pathway bacterial outer membrane biogenesis; lipopolysaccharide biosynthesis. Its function is as follows. Activates KDO8N (a required 8-carbon sugar) for incorporation into bacterial lipopolysaccharide in the Shewanella genus. The chain is 8-amino-3,8-dideoxy-manno-octulosonate cytidylyltransferase from Shewanella oneidensis (strain ATCC 700550 / JCM 31522 / CIP 106686 / LMG 19005 / NCIMB 14063 / MR-1).